The chain runs to 444 residues: Transcriptional coactivator nsrH (444 aa).

The region spanning 74-144 (ASQVSEILAC…ERDHVAHTPL (71 aa)) is the HTH iclR-type domain. The H-T-H motif DNA-binding region spans 104 to 123 (IKDIADLTNVPESRLRRIIR).

The protein localises to the nucleus. Functionally, transcriptional coactivator; part of the gene cluster that mediates the biosynthesis of the tetrahydroxanthone dimer neosartorin, which exhibits antibacterial activity. The protein is Transcriptional coactivator nsrH of Aspergillus novofumigatus (strain IBT 16806).